Consider the following 540-residue polypeptide: Terminase large subunit (540 aa).

Residues Asp352, Asp424, and Asp523 each contribute to the Mn(2+) site.

Belongs to the skunavirus terminase large subunit family. In terms of assembly, interacts with the terminase small subunit; the active complex is probably heterooligomeric. Requires Mn(2+) as cofactor. Mg(2+) is required as a cofactor.

Probable terminase large subunit. The terminase large subunit acts as an ATP driven molecular motor necessary for viral DNA translocation into empty capsids and as an endonuclease that cuts the viral genome to initiate and to end a packaging reaction. The terminase lies at a unique vertex of the procapsid and is composed of two subunits, a small terminase subunit involved in viral DNA recognition (packaging sequence), and a large terminase subunit possessing endonucleolytic and ATPase activities. Both terminase subunits heterooligomerize and are docked on the portal protein to form the packaging machine. The terminase large subunit exhibits endonuclease activity and cleaves the viral genome concatemer. The polypeptide is Terminase large subunit (Lactococcus lactis (Lactococcus lactis bacteriophage p2)).